Consider the following 156-residue polypeptide: Endoribonuclease YbeY (156 aa).

The Zn(2+) site is built by His122, His126, and His132.

Belongs to the endoribonuclease YbeY family. It depends on Zn(2+) as a cofactor.

It is found in the cytoplasm. In terms of biological role, single strand-specific metallo-endoribonuclease involved in late-stage 70S ribosome quality control and in maturation of the 3' terminus of the 16S rRNA. This chain is Endoribonuclease YbeY, found in Geobacillus sp. (strain WCH70).